Here is a 382-residue protein sequence, read N- to C-terminus: Anthranilate O-methyltransferase 1 (382 aa).

Tyr20 serves as a coordination point for S-adenosyl-L-homocysteine. Gln27 is a binding site for anthranilate. S-adenosyl-L-homocysteine is bound by residues Cys61, Asn66, Asp102, Leu103, Ser146, and Tyr147. Residue Trp168 participates in anthranilate binding. Mg(2+)-binding residues include Glu268 and Phe270.

It belongs to the methyltransferase superfamily. Type-7 methyltransferase family. SABATH subfamily.

The catalysed reaction is anthranilate + S-adenosyl-L-methionine = O-methyl anthranilate + S-adenosyl-L-homocysteine. Its function is as follows. Methyltransferase involved in the biosynthesis of methyl anthranilate in response to stresses. Utilizes anthranilic acid as substrate, but not salicylic acid. Produces exclusively the O-methyl ester. This is Anthranilate O-methyltransferase 1 (AAMT1) from Zea mays (Maize).